A 268-amino-acid chain; its full sequence is Phosphatidylglycerol--prolipoprotein diacylglyceryl transferase (268 aa).

4 helical membrane passes run 14-34 (LGPI…FAGW), 57-77 (LTFY…IIFY), 90-110 (FFLW…LIAF), and 117-137 (IGAN…IGLG). R140 is an a 1,2-diacyl-sn-glycero-3-phospho-(1'-sn-glycerol) binding site. The next 3 membrane-spanning stretches (helical) occupy residues 174–194 (QLFE…LVTI), 200–220 (YLVL…CEFF), and 238–258 (GQIL…AVFI).

The protein belongs to the Lgt family.

It localises to the cell inner membrane. It catalyses the reaction L-cysteinyl-[prolipoprotein] + a 1,2-diacyl-sn-glycero-3-phospho-(1'-sn-glycerol) = an S-1,2-diacyl-sn-glyceryl-L-cysteinyl-[prolipoprotein] + sn-glycerol 1-phosphate + H(+). Its pathway is protein modification; lipoprotein biosynthesis (diacylglyceryl transfer). Its function is as follows. Catalyzes the transfer of the diacylglyceryl group from phosphatidylglycerol to the sulfhydryl group of the N-terminal cysteine of a prolipoprotein, the first step in the formation of mature lipoproteins. This is Phosphatidylglycerol--prolipoprotein diacylglyceryl transferase from Francisella tularensis subsp. novicida (strain U112).